Reading from the N-terminus, the 465-residue chain is Ribulose bisphosphate carboxylase large chain (465 aa).

Lys4 carries the N6,N6,N6-trimethyllysine modification. Residues Asn113 and Thr163 each coordinate substrate. Lys165 serves as the catalytic Proton acceptor. Lys167 provides a ligand contact to substrate. 3 residues coordinate Mg(2+): Lys191, Asp193, and Glu194. Lys191 is modified (N6-carboxylysine). The active-site Proton acceptor is the His284. Arg285, His317, and Ser369 together coordinate substrate.

The protein belongs to the RuBisCO large chain family. Type I subfamily. As to quaternary structure, heterohexadecamer of 8 large chains and 8 small chains; disulfide-linked. The disulfide link is formed within the large subunit homodimers. Requires Mg(2+) as cofactor. In terms of processing, the disulfide bond which can form in the large chain dimeric partners within the hexadecamer appears to be associated with oxidative stress and protein turnover.

The protein localises to the plastid. It is found in the chloroplast. The enzyme catalyses 2 (2R)-3-phosphoglycerate + 2 H(+) = D-ribulose 1,5-bisphosphate + CO2 + H2O. The catalysed reaction is D-ribulose 1,5-bisphosphate + O2 = 2-phosphoglycolate + (2R)-3-phosphoglycerate + 2 H(+). Functionally, ruBisCO catalyzes two reactions: the carboxylation of D-ribulose 1,5-bisphosphate, the primary event in carbon dioxide fixation, as well as the oxidative fragmentation of the pentose substrate in the photorespiration process. Both reactions occur simultaneously and in competition at the same active site. The protein is Ribulose bisphosphate carboxylase large chain of Nepenthes alata (Winged pitcher plant).